A 369-amino-acid chain; its full sequence is mRNA cap guanine-N(7) methyltransferase 1 (369 aa).

Residues 1–55 (MNKRPRDEPSSSFASAPKRQYGAGGGGYGGHGYSEERSSARRVADHYSARSNQTL) form a disordered region. Residues 22–32 (GAGGGGYGGHG) are compositionally biased toward gly residues. Over residues 33-48 (YSEERSSARRVADHYS) the composition is skewed to basic and acidic residues. The mRNA cap 0 methyltransferase domain maps to 61–340 (SPIIHLKKLN…LYLAFVLRKR (280 aa)). 70–71 (NN) lines the mRNA pocket. Residues Lys74, Ala92, Asp114, 149-150 (DC), and 171-173 (QFA) contribute to the S-adenosyl-L-methionine site.

The protein belongs to the class I-like SAM-binding methyltransferase superfamily. mRNA cap 0 methyltransferase family.

Its subcellular location is the nucleus. The catalysed reaction is a 5'-end (5'-triphosphoguanosine)-ribonucleoside in mRNA + S-adenosyl-L-methionine = a 5'-end (N(7)-methyl 5'-triphosphoguanosine)-ribonucleoside in mRNA + S-adenosyl-L-homocysteine. Functionally, mRNA-capping methyltransferase that methylates the N7 position of the added guanosine to the 5'-cap structure of mRNAs. Binds RNA containing 5'-terminal GpppC. This Oryza sativa subsp. japonica (Rice) protein is mRNA cap guanine-N(7) methyltransferase 1.